The following is a 194-amino-acid chain: Peptidyl-tRNA hydrolase (194 aa).

A tRNA-binding site is contributed by Tyr16. The active-site Proton acceptor is His21. The tRNA site is built by Phe67, Asn69, and Asn115.

The protein belongs to the PTH family. As to quaternary structure, monomer.

Its subcellular location is the cytoplasm. The catalysed reaction is an N-acyl-L-alpha-aminoacyl-tRNA + H2O = an N-acyl-L-amino acid + a tRNA + H(+). Hydrolyzes ribosome-free peptidyl-tRNAs (with 1 or more amino acids incorporated), which drop off the ribosome during protein synthesis, or as a result of ribosome stalling. In terms of biological role, catalyzes the release of premature peptidyl moieties from peptidyl-tRNA molecules trapped in stalled 50S ribosomal subunits, and thus maintains levels of free tRNAs and 50S ribosomes. In Shigella boydii serotype 4 (strain Sb227), this protein is Peptidyl-tRNA hydrolase.